The sequence spans 216 residues: Adenylate kinase (216 aa).

10–15 (GAGKGT) provides a ligand contact to ATP. Residues 30–59 (STGDIFRKNISEKTPLGVKAKEYMDKGQLV) are NMP. Residues Thr-31, Arg-36, 57–59 (QLV), 85–88 (GFPR), and Gln-92 contribute to the AMP site. Positions 126-163 (GRRVCPSCGASYHIKFNPPKIEGLCDVCKKEVIQRKDD) are LID. Arg-127 is a binding site for ATP. Cys-130 and Cys-133 together coordinate Zn(2+). Residue 136-137 (SY) coordinates ATP. Zn(2+) is bound by residues Cys-150 and Cys-153. AMP contacts are provided by Arg-160 and Arg-171. Gln-199 contacts ATP.

This sequence belongs to the adenylate kinase family. As to quaternary structure, monomer.

The protein resides in the cytoplasm. The enzyme catalyses AMP + ATP = 2 ADP. It participates in purine metabolism; AMP biosynthesis via salvage pathway; AMP from ADP: step 1/1. Its function is as follows. Catalyzes the reversible transfer of the terminal phosphate group between ATP and AMP. Plays an important role in cellular energy homeostasis and in adenine nucleotide metabolism. The protein is Adenylate kinase of Clostridium novyi (strain NT).